Here is a 412-residue protein sequence, read N- to C-terminus: Phosphate-repressible acid phosphatase (412 aa).

A signal peptide spans 1 to 19 (MLTKQTLLAFVGALALATG). N-linked (GlcNAc...) asparagine glycans are attached at residues Asn-74, Asn-121, Asn-186, and Asn-208. Residue Asp-215 is the Proton donor of the active site. Residues Asn-217, Asn-332, and Asn-343 are each glycosylated (N-linked (GlcNAc...) asparagine).

The N-terminus is blocked.

Its subcellular location is the secreted. It carries out the reaction a phosphate monoester + H2O = an alcohol + phosphate. This is Phosphate-repressible acid phosphatase (PHOA) from Penicillium chrysogenum (Penicillium notatum).